The sequence spans 1487 residues: Protein clueless (1487 aa).

Disordered stretches follow at residues M1–A94 and G110–A140. The span at T56–N65 shows a compositional bias: basic residues. Low complexity predominate over residues A111–S126. Phosphoserine is present on S284. The region spanning R438–L680 is the Clu domain. The span at Q739–K785 shows a compositional bias: basic and acidic residues. Disordered regions lie at residues Q739 to A794 and V980 to T1040. The segment covering K988 to K1005 has biased composition (basic residues). A compositionally biased stretch (polar residues) spans P1009–Q1019. Residues N1020–T1040 show a composition bias toward low complexity. 3 TPR repeats span residues A1140 to V1173, A1266 to Y1299, and G1301 to T1334. Positions D1456–S1487 are disordered. Residues T1470–S1487 show a composition bias toward polar residues.

This sequence belongs to the CLU family.

It localises to the cytoplasm. Functionally, mRNA-binding protein involved in proper cytoplasmic distribution of mitochondria. The sequence is that of Protein clueless from Drosophila mojavensis (Fruit fly).